Consider the following 1015-residue polypeptide: DNA ligase 3 (1015 aa).

A PARP-type zinc finger spans residues 94–186 (FCVDYAKRGT…QISQHIADLS (93 aa)). Cys106, Cys109, His140, and Cys143 together coordinate Zn(2+). Phosphoserine is present on residues Ser211, Ser217, Ser228, and Ser244. The interval 229–255 (GFSAAKPNNSEQAPSSPAPGTSLSASK) is disordered. The segment covering 234 to 253 (KPNNSEQAPSSPAPGTSLSA) has biased composition (polar residues). Interaction with DNA stretches follow at residues 279–282 (PSYN), 323–328 (VYNLND), 393–396 (TKED), and 426–432 (KMNSGAK). Glu511 is a binding site for ATP. Lys513 (N6-AMP-lysine intermediate) is an active-site residue. Arg518 and Arg533 together coordinate ATP. Residues Glu565 and Glu660 each contribute to the Mg(2+) site. ATP contacts are provided by Lys665, Arg676, and Lys680. Residues 849–926 (DEASPTTGGS…KSSPVKVGMK (78 aa)) are disordered. Over residues 854-884 (TTGGSSGENEGTAGSAGPCKGPPSKSSASAK) the composition is skewed to low complexity. At Ser919 the chain carries Phosphoserine. The 77-residue stretch at 939-1015 (VLLDVFTGVR…IRKRRLIAPC (77 aa)) folds into the BRCT domain.

The protein belongs to the ATP-dependent DNA ligase family. Isoform 3 interacts (via BRCT domain) with the nuclear DNA-repair protein XRCC1. Interacts with POLG. Interacts with POLB. Mg(2+) serves as cofactor. The alpha isoform is expressed in all tissues, while the beta isoform is expressed only in the testis.

It is found in the nucleus. The enzyme catalyses ATP + (deoxyribonucleotide)n-3'-hydroxyl + 5'-phospho-(deoxyribonucleotide)m = (deoxyribonucleotide)n+m + AMP + diphosphate.. The alpha isoform interacts with DNA-repair protein XRCC1 and can correct defective DNA strand-break repair and sister chromatid exchange following treatment with ionizing radiation and alkylating agents. The beta isoform does not interact with XRCC1 and may be specifically involved in the completion of homologous recombination events that occur during meiotic prophase. In Mus musculus (Mouse), this protein is DNA ligase 3 (Lig3).